We begin with the raw amino-acid sequence, 418 residues long: Trans-acting enoyl reductase (418 aa).

Belongs to the saccharopine dehydrogenase family. Enoyl reductase subfamily.

Functionally, involved in the reduction of the double bond between C-4 and C-5 during phthiocerol dimycocerosates (DIM A) and glycosylated phenolphthiocerol dimycocerosates (PGL) biosynthesis. The protein is Trans-acting enoyl reductase of Mycobacterium leprae (strain TN).